The sequence spans 809 residues: G-type lectin S-receptor-like serine/threonine-protein kinase At1g61480 (809 aa).

An N-terminal signal peptide occupies residues 1 to 24; it reads MGKKRIMFFASLLLITIFLSFSYA. Positions 25-144 constitute a Bulb-type lectin domain; that stretch reads GITRESPLSI…NSGRTLWESF (120 aa). Topologically, residues 25–425 are extracellular; that stretch reads GITRESPLSI…SELGGNKRNK (401 aa). Residues Asn-53, Asn-88, Asn-94, Asn-103, Asn-117, Asn-134, and Asn-236 are each glycosylated (N-linked (GlcNAc...) asparagine). In terms of domain architecture, EGF-like spans 278–314; sequence PENSCDIYGFCGPFGICVMSVPPKCKCFKGFVPKSIE. Intrachain disulfides connect Cys-282–Cys-294 and Cys-288–Cys-302. Asn-320 and Asn-375 each carry an N-linked (GlcNAc...) asparagine glycan. Residues 333-415 enclose the PAN domain; sequence CQGNTNGKTV…GEILSIRLAS (83 aa). Intrachain disulfides connect Cys-368–Cys-389 and Cys-372–Cys-378. The helical transmembrane segment at 426–446 threads the bilayer; sequence IIVASIVSLSLFVILAFAAFC. Residues 447–809 are Cytoplasmic-facing; sequence FLRYKVKHTV…EMTQSVILGR (363 aa). The region spanning 496–781 is the Protein kinase domain; sequence FSLSNKLGQG…DLTSPKQPTF (286 aa). Residues 502-510 and Lys-524 each bind ATP; that span reads LGQGGFGSV. Phosphoserine is present on residues Ser-530 and Ser-545. The segment at 585-602 is caM-binding; it reads RKRLEIDWPKRFNIIEGI. The active-site Proton acceptor is the Asp-621. Phosphoserine is present on residues Ser-625 and Ser-638. Residue Thr-655 is modified to Phosphothreonine. Phosphoserine is present on residues Ser-698 and Ser-792.

This sequence belongs to the protein kinase superfamily. Ser/Thr protein kinase family.

It localises to the cell membrane. It catalyses the reaction L-seryl-[protein] + ATP = O-phospho-L-seryl-[protein] + ADP + H(+). It carries out the reaction L-threonyl-[protein] + ATP = O-phospho-L-threonyl-[protein] + ADP + H(+). This chain is G-type lectin S-receptor-like serine/threonine-protein kinase At1g61480, found in Arabidopsis thaliana (Mouse-ear cress).